The primary structure comprises 215 residues: Phosphatidylserine decarboxylase proenzyme (215 aa).

Catalysis depends on Ser-181, which acts as the Schiff-base intermediate with substrate; via pyruvic acid. Ser-181 is modified (pyruvic acid (Ser); by autocatalysis).

Belongs to the phosphatidylserine decarboxylase family. PSD-A subfamily. Heterodimer of a large membrane-associated beta subunit and a small pyruvoyl-containing alpha subunit. It depends on pyruvate as a cofactor. Is synthesized initially as an inactive proenzyme. Formation of the active enzyme involves a self-maturation process in which the active site pyruvoyl group is generated from an internal serine residue via an autocatalytic post-translational modification. Two non-identical subunits are generated from the proenzyme in this reaction, and the pyruvate is formed at the N-terminus of the alpha chain, which is derived from the carboxyl end of the proenzyme. The post-translation cleavage follows an unusual pathway, termed non-hydrolytic serinolysis, in which the side chain hydroxyl group of the serine supplies its oxygen atom to form the C-terminus of the beta chain, while the remainder of the serine residue undergoes an oxidative deamination to produce ammonia and the pyruvoyl prosthetic group on the alpha chain.

It is found in the cell membrane. It catalyses the reaction a 1,2-diacyl-sn-glycero-3-phospho-L-serine + H(+) = a 1,2-diacyl-sn-glycero-3-phosphoethanolamine + CO2. It participates in phospholipid metabolism; phosphatidylethanolamine biosynthesis; phosphatidylethanolamine from CDP-diacylglycerol: step 2/2. In terms of biological role, catalyzes the formation of phosphatidylethanolamine (PtdEtn) from phosphatidylserine (PtdSer). The polypeptide is Phosphatidylserine decarboxylase proenzyme (Polynucleobacter asymbioticus (strain DSM 18221 / CIP 109841 / QLW-P1DMWA-1) (Polynucleobacter necessarius subsp. asymbioticus)).